The chain runs to 84 residues: RNA-binding protein Hfq (84 aa).

In terms of domain architecture, Sm spans 11–71 (DTFLNHVRKN…ISTIMPGHPV (61 aa)).

This sequence belongs to the Hfq family. As to quaternary structure, homohexamer.

Its function is as follows. RNA chaperone that binds small regulatory RNA (sRNAs) and mRNAs to facilitate mRNA translational regulation in response to envelope stress, environmental stress and changes in metabolite concentrations. Also binds with high specificity to tRNAs. This Methylobacterium nodulans (strain LMG 21967 / CNCM I-2342 / ORS 2060) protein is RNA-binding protein Hfq.